The primary structure comprises 368 residues: 1-deoxy-D-xylulose 5-phosphate reductoisomerase (368 aa).

NADPH contacts are provided by Thr-7, Gly-8, Ser-9, Ile-10, Gly-31, Lys-32, Asn-33, and Asn-113. A 1-deoxy-D-xylulose 5-phosphate-binding site is contributed by Lys-114. Residue Glu-115 coordinates NADPH. Asp-133 is a binding site for Mn(2+). Positions 134, 135, 158, and 181 each coordinate 1-deoxy-D-xylulose 5-phosphate. Residue Glu-135 participates in Mn(2+) binding. Gly-187 lines the NADPH pocket. Ser-194, Asn-199, Lys-200, and Glu-203 together coordinate 1-deoxy-D-xylulose 5-phosphate. Glu-203 contacts Mn(2+).

It belongs to the DXR family. Mg(2+) serves as cofactor. Mn(2+) is required as a cofactor.

It catalyses the reaction 2-C-methyl-D-erythritol 4-phosphate + NADP(+) = 1-deoxy-D-xylulose 5-phosphate + NADPH + H(+). It functions in the pathway isoprenoid biosynthesis; isopentenyl diphosphate biosynthesis via DXP pathway; isopentenyl diphosphate from 1-deoxy-D-xylulose 5-phosphate: step 1/6. In terms of biological role, catalyzes the NADPH-dependent rearrangement and reduction of 1-deoxy-D-xylulose-5-phosphate (DXP) to 2-C-methyl-D-erythritol 4-phosphate (MEP). The chain is 1-deoxy-D-xylulose 5-phosphate reductoisomerase from Helicobacter pylori (strain J99 / ATCC 700824) (Campylobacter pylori J99).